We begin with the raw amino-acid sequence, 477 residues long: Ribulose bisphosphate carboxylase large chain (477 aa).

Residues 1-2 constitute a propeptide that is removed on maturation; that stretch reads MS. Pro3 carries the post-translational modification N-acetylproline. Lys14 is modified (N6,N6,N6-trimethyllysine). Substrate contacts are provided by Asn123 and Thr173. The active-site Proton acceptor is Lys175. Substrate is bound at residue Lys177. 3 residues coordinate Mg(2+): Lys201, Asp203, and Glu204. Lys201 is modified (N6-carboxylysine). His294 acts as the Proton acceptor in catalysis. Positions 295, 327, and 379 each coordinate substrate.

Belongs to the RuBisCO large chain family. Type I subfamily. In terms of assembly, heterohexadecamer of 8 large chains and 8 small chains; disulfide-linked. The disulfide link is formed within the large subunit homodimers. The cofactor is Mg(2+). In terms of processing, the disulfide bond which can form in the large chain dimeric partners within the hexadecamer appears to be associated with oxidative stress and protein turnover.

Its subcellular location is the plastid. It localises to the chloroplast. It catalyses the reaction 2 (2R)-3-phosphoglycerate + 2 H(+) = D-ribulose 1,5-bisphosphate + CO2 + H2O. The catalysed reaction is D-ribulose 1,5-bisphosphate + O2 = 2-phosphoglycolate + (2R)-3-phosphoglycerate + 2 H(+). Its function is as follows. RuBisCO catalyzes two reactions: the carboxylation of D-ribulose 1,5-bisphosphate, the primary event in carbon dioxide fixation, as well as the oxidative fragmentation of the pentose substrate in the photorespiration process. Both reactions occur simultaneously and in competition at the same active site. The chain is Ribulose bisphosphate carboxylase large chain (rbcL) from Solanum tuberosum (Potato).